A 689-amino-acid polypeptide reads, in one-letter code: Glycine--tRNA ligase beta subunit (689 aa).

This sequence belongs to the class-II aminoacyl-tRNA synthetase family. In terms of assembly, tetramer of two alpha and two beta subunits.

It is found in the cytoplasm. The catalysed reaction is tRNA(Gly) + glycine + ATP = glycyl-tRNA(Gly) + AMP + diphosphate. In Sodalis glossinidius (strain morsitans), this protein is Glycine--tRNA ligase beta subunit.